A 261-amino-acid chain; its full sequence is Cytochrome c oxidase subunit 3 (261 aa).

Residues 1-15 (MTHQTHAYHMVNPSP) lie on the Mitochondrial matrix side of the membrane. Residues 16–34 (WPLTGALSALLMTSGLIMW) traverse the membrane as a helical segment. Over 35 to 40 (FHFNST) the chain is Mitochondrial intermembrane. Residues 41–66 (TLLMLGLTTNMLTMYQWWRDVIREST) traverse the membrane as a helical segment. Over 67 to 72 (FQGHHT) the chain is Mitochondrial matrix. Residues 73–105 (PNVQKGLRYGMILFIISEVLFFTGFFWAFYHSS) form a helical membrane-spanning segment. Over 106 to 128 (LAPTPELGGCWPPTGINPLNPLE) the chain is Mitochondrial intermembrane. A helical transmembrane segment spans residues 129–152 (VPLLNTSVLLASGVSITWAHHSLM). The Mitochondrial matrix portion of the chain corresponds to 153–155 (EGN). The helical transmembrane segment at 156–183 (RNHMLQALFITIALGVYFTLLQASEYYE) threads the bilayer. The Mitochondrial intermembrane portion of the chain corresponds to 184 to 190 (APFTISD). The helical transmembrane segment at 191-223 (GVYGSTFFVATGFHGLHVIIGSTFLIVCFFRQL) threads the bilayer. Over 224 to 232 (KFHFTSNHH) the chain is Mitochondrial matrix. Residues 233-256 (FGFEAAAWYWHFVDVVWLFLYVSI) form a helical membrane-spanning segment. At 257 to 261 (YWWGS) the chain is on the mitochondrial intermembrane side.

Belongs to the cytochrome c oxidase subunit 3 family. Component of the cytochrome c oxidase (complex IV, CIV), a multisubunit enzyme composed of 14 subunits. The complex is composed of a catalytic core of 3 subunits MT-CO1, MT-CO2 and MT-CO3, encoded in the mitochondrial DNA, and 11 supernumerary subunits COX4I, COX5A, COX5B, COX6A, COX6B, COX6C, COX7A, COX7B, COX7C, COX8 and NDUFA4, which are encoded in the nuclear genome. The complex exists as a monomer or a dimer and forms supercomplexes (SCs) in the inner mitochondrial membrane with NADH-ubiquinone oxidoreductase (complex I, CI) and ubiquinol-cytochrome c oxidoreductase (cytochrome b-c1 complex, complex III, CIII), resulting in different assemblies (supercomplex SCI(1)III(2)IV(1) and megacomplex MCI(2)III(2)IV(2)).

The protein localises to the mitochondrion inner membrane. It carries out the reaction 4 Fe(II)-[cytochrome c] + O2 + 8 H(+)(in) = 4 Fe(III)-[cytochrome c] + 2 H2O + 4 H(+)(out). Functionally, component of the cytochrome c oxidase, the last enzyme in the mitochondrial electron transport chain which drives oxidative phosphorylation. The respiratory chain contains 3 multisubunit complexes succinate dehydrogenase (complex II, CII), ubiquinol-cytochrome c oxidoreductase (cytochrome b-c1 complex, complex III, CIII) and cytochrome c oxidase (complex IV, CIV), that cooperate to transfer electrons derived from NADH and succinate to molecular oxygen, creating an electrochemical gradient over the inner membrane that drives transmembrane transport and the ATP synthase. Cytochrome c oxidase is the component of the respiratory chain that catalyzes the reduction of oxygen to water. Electrons originating from reduced cytochrome c in the intermembrane space (IMS) are transferred via the dinuclear copper A center (CU(A)) of subunit 2 and heme A of subunit 1 to the active site in subunit 1, a binuclear center (BNC) formed by heme A3 and copper B (CU(B)). The BNC reduces molecular oxygen to 2 water molecules using 4 electrons from cytochrome c in the IMS and 4 protons from the mitochondrial matrix. The protein is Cytochrome c oxidase subunit 3 (MT-CO3) of Gazella subgutturosa (Goitred gazelle).